Here is a 497-residue protein sequence, read N- to C-terminus: Acetyl-coenzyme A carboxylase carboxyl transferase subunit beta, chloroplastic (497 aa).

Positions 230–497 (LWVQCENCYG…FFPLNQNSIK (268 aa)) constitute a CoA carboxyltransferase N-terminal domain. Cys234, Cys237, Cys253, and Cys256 together coordinate Zn(2+). The C4-type zinc finger occupies 234–256 (CENCYGLNYKKFLKSKMNICEQC).

Belongs to the AccD/PCCB family. In terms of assembly, acetyl-CoA carboxylase is a heterohexamer composed of biotin carboxyl carrier protein, biotin carboxylase and 2 subunits each of ACCase subunit alpha and ACCase plastid-coded subunit beta (accD). Zn(2+) is required as a cofactor.

It is found in the plastid. Its subcellular location is the chloroplast stroma. The catalysed reaction is N(6)-carboxybiotinyl-L-lysyl-[protein] + acetyl-CoA = N(6)-biotinyl-L-lysyl-[protein] + malonyl-CoA. It functions in the pathway lipid metabolism; malonyl-CoA biosynthesis; malonyl-CoA from acetyl-CoA: step 1/1. In terms of biological role, component of the acetyl coenzyme A carboxylase (ACC) complex. Biotin carboxylase (BC) catalyzes the carboxylation of biotin on its carrier protein (BCCP) and then the CO(2) group is transferred by the transcarboxylase to acetyl-CoA to form malonyl-CoA. The protein is Acetyl-coenzyme A carboxylase carboxyl transferase subunit beta, chloroplastic of Carica papaya (Papaya).